We begin with the raw amino-acid sequence, 256 residues long: Kallikrein-15 (256 aa).

The N-terminal stretch at 1–16 is a signal peptide; the sequence is MWLLLTLSFLLASTAA. A propeptide spans 17 to 21 (activation peptide); the sequence is QDGDK. One can recognise a Peptidase S1 domain in the interval 22 to 254; sequence LLEGDECAPH…YLEWIRETMK (233 aa). C47 and C63 form a disulfide bridge. Residues H62 and D106 each act as charge relay system in the active site. Cystine bridges form between C138–C215, C180–C194, and C205–C230. N171 carries N-linked (GlcNAc...) asparagine glycosylation. S209 serves as the catalytic Charge relay system. A glycan (N-linked (GlcNAc...) asparagine) is linked at N232.

It belongs to the peptidase S1 family. Kallikrein subfamily. As to expression, highest expression in the thyroid gland. Also expressed in the prostate, salivary, and adrenal glands and in the colon testis and kidney.

It is found in the secreted. Its function is as follows. Protease whose physiological substrate is not yet known. The sequence is that of Kallikrein-15 (KLK15) from Homo sapiens (Human).